The chain runs to 332 residues: Transaldolase (332 aa).

Lysine 136 (schiff-base intermediate with substrate) is an active-site residue.

This sequence belongs to the transaldolase family. Type 1 subfamily.

It is found in the cytoplasm. The catalysed reaction is D-sedoheptulose 7-phosphate + D-glyceraldehyde 3-phosphate = D-erythrose 4-phosphate + beta-D-fructose 6-phosphate. It participates in carbohydrate degradation; pentose phosphate pathway; D-glyceraldehyde 3-phosphate and beta-D-fructose 6-phosphate from D-ribose 5-phosphate and D-xylulose 5-phosphate (non-oxidative stage): step 2/3. In terms of biological role, transaldolase is important for the balance of metabolites in the pentose-phosphate pathway. This is Transaldolase from Nostoc sp. (strain PCC 7120 / SAG 25.82 / UTEX 2576).